Consider the following 426-residue polypeptide: Melibiose/raffinose/stachyose-binding protein MelE (426 aa).

Residues 1–18 form the signal peptide; sequence MKHTFVLFLSLILLVLPG. A lipid anchor (N-palmitoyl cysteine) is attached at Cys19. Residue Cys19 is the site of S-diacylglycerol cysteine attachment.

Belongs to the bacterial solute-binding protein 1 family. In terms of assembly, the complex is composed of two ATP-binding proteins (MsmX), two transmembrane proteins (MelC and MelD) and a solute-binding protein (MelE).

It is found in the cell membrane. In terms of biological role, part of the ABC transporter complex MelEDC-MsmX involved in melibiose, raffinose and stachyose import. Binds melibiose, raffinose and stachyose. The chain is Melibiose/raffinose/stachyose-binding protein MelE from Bacillus subtilis (strain 168).